The following is a 365-amino-acid chain: 3-isopropylmalate dehydrogenase (365 aa).

An NAD(+)-binding site is contributed by 80–93 (GPKWADNTGDQRPE). Positions 100, 110, 138, and 223 each coordinate substrate. 3 residues coordinate Mg(2+): Asp223, Asp247, and Asp251. 280–292 (GSAPDIAGQDVAN) is an NAD(+) binding site. Residues 337–365 (NEEDASTSAFGREVATRAADSVPQNAPTP) are disordered.

The protein belongs to the isocitrate and isopropylmalate dehydrogenases family. LeuB type 1 subfamily. Homodimer. Requires Mg(2+) as cofactor. The cofactor is Mn(2+).

The protein localises to the cytoplasm. It catalyses the reaction (2R,3S)-3-isopropylmalate + NAD(+) = 4-methyl-2-oxopentanoate + CO2 + NADH. It functions in the pathway amino-acid biosynthesis; L-leucine biosynthesis; L-leucine from 3-methyl-2-oxobutanoate: step 3/4. Its function is as follows. Catalyzes the oxidation of 3-carboxy-2-hydroxy-4-methylpentanoate (3-isopropylmalate) to 3-carboxy-4-methyl-2-oxopentanoate. The product decarboxylates to 4-methyl-2 oxopentanoate. This chain is 3-isopropylmalate dehydrogenase, found in Salinibacter ruber (strain DSM 13855 / M31).